A 28-amino-acid chain; its full sequence is Conotoxin de7b (28 aa).

Cystine bridges form between cysteine 2/cysteine 18, cysteine 9/cysteine 22, and cysteine 17/cysteine 27. Proline 4 is modified (4-hydroxyproline; partial). Residue glutamate 7 is modified to 4-carboxyglutamate; partial. Proline 14 is modified (4-hydroxyproline; partial).

Expressed by the venom duct.

It localises to the secreted. Its function is as follows. May inhibit sodium (Nav) or calcium channels (Cav). The protein is Conotoxin de7b of Conasprella delessertii (Sozon's cone).